We begin with the raw amino-acid sequence, 490 residues long: Betaine aldehyde dehydrogenase (490 aa).

Residues T26, I27, and D93 each coordinate K(+). 150-152 (GAW) contacts NAD(+). Catalysis depends on K162, which acts as the Charge relay system. 176 to 179 (KPSE) lines the NAD(+) pocket. V180 is a K(+) binding site. 230–233 (GVAS) serves as a coordination point for NAD(+). Position 246 (L246) interacts with K(+). Catalysis depends on E252, which acts as the Proton acceptor. The NAD(+) site is built by G254, C286, and E387. Residue C286 is the Nucleophile of the active site. C286 carries the cysteine sulfenic acid (-SOH) modification. Positions 457 and 460 each coordinate K(+). E464 (charge relay system) is an active-site residue.

The protein belongs to the aldehyde dehydrogenase family. As to quaternary structure, dimer of dimers. The cofactor is K(+).

The enzyme catalyses betaine aldehyde + NAD(+) + H2O = glycine betaine + NADH + 2 H(+). It functions in the pathway amine and polyamine biosynthesis; betaine biosynthesis via choline pathway; betaine from betaine aldehyde: step 1/1. Involved in the biosynthesis of the osmoprotectant glycine betaine. Catalyzes the irreversible oxidation of betaine aldehyde to the corresponding acid. The chain is Betaine aldehyde dehydrogenase from Escherichia coli (strain ATCC 8739 / DSM 1576 / NBRC 3972 / NCIMB 8545 / WDCM 00012 / Crooks).